Consider the following 554-residue polypeptide: Hydroxylamine reductase (554 aa).

[2Fe-2S] cluster is bound by residues C3, C6, C18, and C25. Positions 252, 276, 320, 408, 436, 461, 495, and 497 each coordinate hybrid [4Fe-2O-2S] cluster. C408 is modified (cysteine persulfide).

This sequence belongs to the HCP family. [2Fe-2S] cluster serves as cofactor. Requires hybrid [4Fe-2O-2S] cluster as cofactor.

The protein resides in the cytoplasm. It carries out the reaction A + NH4(+) + H2O = hydroxylamine + AH2 + H(+). Its function is as follows. Catalyzes the reduction of hydroxylamine to form NH(3) and H(2)O. The polypeptide is Hydroxylamine reductase (Shewanella loihica (strain ATCC BAA-1088 / PV-4)).